The following is a 413-amino-acid chain: uncharacterized protein (413 aa).

A helical transmembrane segment spans residues Leu-14–Leu-34. Asn-46, Asn-55, Asn-103, Asn-171, Asn-179, Asn-184, Asn-220, Asn-252, Asn-260, Asn-273, Asn-362, Asn-366, Asn-374, Asn-378, Asn-393, and Asn-408 each carry an N-linked (GlcNAc...) asparagine; by host glycan. Residues Thr-250 to Glu-263 show a composition bias toward low complexity. A disordered region spans residues Thr-250 to Pro-277. Positions Ile-264–Pro-277 are enriched in polar residues.

The protein resides in the membrane. This is an uncharacterized protein from Acanthamoeba polyphaga (Amoeba).